An 880-amino-acid chain; its full sequence is Alanine--tRNA ligase (880 aa).

Zn(2+) contacts are provided by His-567, His-571, Cys-669, and His-673.

It belongs to the class-II aminoacyl-tRNA synthetase family. The cofactor is Zn(2+).

It is found in the cytoplasm. It catalyses the reaction tRNA(Ala) + L-alanine + ATP = L-alanyl-tRNA(Ala) + AMP + diphosphate. Its function is as follows. Catalyzes the attachment of alanine to tRNA(Ala) in a two-step reaction: alanine is first activated by ATP to form Ala-AMP and then transferred to the acceptor end of tRNA(Ala). Also edits incorrectly charged Ser-tRNA(Ala) and Gly-tRNA(Ala) via its editing domain. This chain is Alanine--tRNA ligase, found in Bacillus cytotoxicus (strain DSM 22905 / CIP 110041 / 391-98 / NVH 391-98).